Reading from the N-terminus, the 1047-residue chain is Jouberin (1047 aa).

Composition is skewed to basic and acidic residues over residues 1-17 and 77-86; these read MEQETPEKVDSAQEKVR and LLHDDKLGSE. Disordered regions lie at residues 1 to 44 and 67 to 185; these read MEQE…LTEA and EQLT…SPVH. The segment at 1–285 is interaction with HAP1; the sequence is MEQETPEKVD…IFNENFPYLL (285 aa). A compositionally biased stretch (basic residues) spans 87–96; that stretch reads KRKKKKKKKV. Residues 116 to 132 are compositionally biased toward basic and acidic residues; sequence GEQKKEGAPEGSHHREG. Positions 150-160 are enriched in basic residues; it reads PKPKKMKKKPK. Residues 173–185 are compositionally biased toward basic and acidic residues; that stretch reads GVHEITGRDSPVH. 7 WD repeats span residues 458-500, 503-542, 546-586, 593-632, 649-688, 692-731, and 736-777; these read AGER…FMRE, GHLNIIYDLDWSKDDRYLVTSSSDGTARVWKNEINSTSTF, PHPS…DAAI, VHKSFVNSICFDDEGHHMYSGDCIGVIAVWDTYVKVTDVQ, FRGVPVSYLEVHPNGKRLLIHTKDSTLRIMDLRILAARKF, ANYREKIHSTLTPCGTLLFSGSEDGIVYVWNPETGEQVAM, and PFKS…AQQE. Ser-854 carries the post-translational modification Phosphoserine. The 61-residue stretch at 903–963 folds into the SH3 domain; that stretch reads DPPPMVVALY…PANHVASETL (61 aa). Composition is skewed to basic and acidic residues over residues 964–1003 and 1012–1040; these read YRDSPPKVKERSPPLTPKEKAKMEKPPASRKSLIKDRFLD and GHSEKGRDQNFEERGHKSDMEMKKSEPTV. Residues 964-1047 are disordered; that stretch reads YRDSPPKVKE…PTVRKVTLIE (84 aa). The residue at position 975 (Ser-975) is a Phosphoserine.

In terms of assembly, self-associates. Part of the tectonic-like complex (also named B9 complex). Interacts with MKS1. Interacts with NPHP1; probably as heterodimers and/or AHI1(2):NPHP1(2) heterotetramers. Interacts (via SH3 domain) with the dynamin GTPase DNM2. Interacts with HAP1; probably as AHI1(2):HAP1(2) heterotetramers. Interacts with RAB8A. Interacts with CEND1. Interacts with SPATA7.

It is found in the cytoplasm. The protein resides in the cytoskeleton. The protein localises to the cilium basal body. It localises to the microtubule organizing center. Its subcellular location is the centrosome. It is found in the centriole. The protein resides in the cell junction. The protein localises to the adherens junction. Involved in vesicle trafficking and required for ciliogenesis, formation of primary non-motile cilium, and recruitment of RAB8A to the basal body of primary cilium. Component of the tectonic-like complex, a complex localized at the transition zone of primary cilia and acting as a barrier that prevents diffusion of transmembrane proteins between the cilia and plasma membranes. Involved in neuronal differentiation. As a positive modulator of classical Wnt signaling, may play a crucial role in ciliary signaling during cerebellum embryonic development. This Rattus norvegicus (Rat) protein is Jouberin (Ahi1).